The primary structure comprises 93 residues: MPRSVKKGPIVASHLLAKIEKQKNLKNKKVIQTWSRSSTITPIFVGHKIAVYNGREHIPVYITENMVGHKLGEFSPTRTYRGHNKKDKKIQKK.

A disordered region spans residues E73–K93. Positions Y80–K93 are enriched in basic residues.

The protein belongs to the universal ribosomal protein uS19 family.

Functionally, protein S19 forms a complex with S13 that binds strongly to the 16S ribosomal RNA. This is Small ribosomal subunit protein uS19 (rpsS) from Aster yellows phytoplasma.